The following is a 544-amino-acid chain: Chaperonin GroEL (544 aa).

ATP contacts are provided by residues 30-33 (TLGP), Lys-51, 87-91 (DGTTT), Gly-415, 478-480 (NAA), and Asp-494.

The protein belongs to the chaperonin (HSP60) family. Forms a cylinder of 14 subunits composed of two heptameric rings stacked back-to-back. Interacts with the co-chaperonin GroES.

It localises to the cytoplasm. It carries out the reaction ATP + H2O + a folded polypeptide = ADP + phosphate + an unfolded polypeptide.. Its function is as follows. Together with its co-chaperonin GroES, plays an essential role in assisting protein folding. The GroEL-GroES system forms a nano-cage that allows encapsulation of the non-native substrate proteins and provides a physical environment optimized to promote and accelerate protein folding. The polypeptide is Chaperonin GroEL (Geobacter sulfurreducens (strain ATCC 51573 / DSM 12127 / PCA)).